The sequence spans 246 residues: UDP-N-acetyl-D-mannosaminuronic acid transferase (246 aa).

It belongs to the glycosyltransferase 26 family.

It catalyses the reaction UDP-N-acetyl-alpha-D-mannosaminouronate + N-acetyl-alpha-D-glucosaminyl-di-trans,octa-cis-undecaprenyl diphosphate = beta-D-ManNAcA-(1-&gt;4)-alpha-D-GlcNAc-di-trans,octa-cis-undecaprenyl diphosphate + UDP + H(+). It participates in bacterial outer membrane biogenesis; enterobacterial common antigen biosynthesis. In terms of biological role, catalyzes the synthesis of Und-PP-GlcNAc-ManNAcA (Lipid II), the second lipid-linked intermediate involved in enterobacterial common antigen (ECA) synthesis. The sequence is that of UDP-N-acetyl-D-mannosaminuronic acid transferase from Klebsiella pneumoniae (strain 342).